We begin with the raw amino-acid sequence, 837 residues long: MASKRKSTTPCMVRTSQVVEQDVPEEVDRAKEKGIGTPQPDVAKDSWAAELENSSKENEVIEVKSMGESQSKKLQGGYECKYCPYSTQNLNEFTEHVDMQHPNVILNPLYVCAECNFTTKKYDSLSDHNSKFHPGEANFKLKLIKRNNQTVLEQSIETTNHVVSITTSGPGTGDSDSGISVSKTPIMKPGKPKADAKKVPKKPEEITPENHVEGTARLVTDTAEILSRLGGVELLQDTLGHVMPSVQLPPNINLVPKVPVPLNTTKYNSALDTNATMINSFNKFPYPTQAELSWLTAASKHPEEHIRIWFATQRLKHGISWSPEEVEEARKKMFNGTIQSVPPTITVLPAQLAPTKVTQPILQTALPCQILGQTSLVLTQVTSGSTTVSCSPITLAVAGVTNHGQKRPLVTPQAAPEPKRPHIAQVPEPPPKVANPPLTPASDRKKTKEQIAHLKASFLQSQFPDDAEVYRLIEVTGLARSEIKKWFSDHRYRCQRGIVHITSESLAKDQLAIAASRHGRTYHAYPDFAPQKFKEKTQGQVKILEDSFLKSSFPTQAELDRLRVETKLSRREIDSWFSERRKLRDSMEQAVLDSMGSGKKGQDVGAPNGALSRLDQLSGAQLTSSLPSPSPAIAKSQEQVHLLRSTFARTQWPTPQEYDQLAAKTGLVRTEIVRWFKENRCLLKTGTVKWMEQYQHQPMADDHGYDAVARKATKPMAESPKNGGDVVPQYYKDPKKLCEEDLEKLVTRVKVGSEPAKDCLPAKPSEATSDRSEGSSRDGQGSDENEESSVVDYVEVTVGEEDAISDRSDSWSQAAAEGVSELAESDSDCVPAEAGQA.

The segment at 27 to 77 is interaction with EFNB1; it reads VDRAKEKGIGTPQPDVAKDSWAAELENSSKENEVIEVKSMGESQSKKLQGG. Thr37 carries the post-translational modification Phosphothreonine. A Glycyl lysine isopeptide (Lys-Gly) (interchain with G-Cter in SUMO2) cross-link involves residue Lys64. 2 consecutive C2H2-type zinc fingers follow at residues 78–101 and 110–133; these read YECKYCPYSTQNLNEFTEHVDMQH and YVCAECNFTTKKYDSLSDHNSKFH. Over residues 164–180 the composition is skewed to low complexity; it reads SITTSGPGTGDSDSGIS. A disordered region spans residues 164-204; sequence SITTSGPGTGDSDSGISVSKTPIMKPGKPKADAKKVPKKPE. A compositionally biased stretch (basic and acidic residues) spans 192-204; that stretch reads PKADAKKVPKKPE. A required for homodimerization region spans residues 195–358; that stretch reads DAKKVPKKPE…PAQLAPTKVT (164 aa). Thr207 is subject to Phosphothreonine. DNA-binding regions (homeobox) lie at residues 263 to 324, 439 to 501, 530 to 591, and 628 to 690; these read NTTK…WSPE, TPAS…IVHI, PQKF…EQAV, and SPSP…TVKW. The interval 263–446 is required for repressor activity; that stretch reads NTTKYNSALD…PLTPASDRKK (184 aa). The tract at residues 263 to 497 is required for interaction with NFYA; it reads NTTKYNSALD…SDHRYRCQRG (235 aa). Residues 317–446 form a required for nuclear localization region; that stretch reads HGISWSPEEV…PLTPASDRKK (130 aa). A disordered region spans residues 404 to 445; that stretch reads GQKRPLVTPQAAPEPKRPHIAQVPEPPPKVANPPLTPASDRK. The segment covering 427–439 has biased composition (pro residues); it reads PEPPPKVANPPLT. Lys455 participates in a covalent cross-link: Glycyl lysine isopeptide (Lys-Gly) (interchain with G-Cter in SUMO2). Positions 755-837 are disordered; sequence PAKDCLPAKP…DCVPAEAGQA (83 aa). Residues Ser825 and Ser827 each carry the phosphoserine modification.

This sequence belongs to the ZHX family. In terms of assembly, homodimer (via homeobox domain). Heterodimer with ZHX1 (via homeobox domain 1). Heterodimer with ZHX3 (via homeobox domain 1). Heterodimerization with ZHX1 is not necessary for repressor activity. Interacts (via homeobox domain) with NFYA (via N-terminus). Interacts with EFNB1 intracellular domain peptide; the interaction enhances ZHX2 transcriptional repression activity. As to expression, ubiquitously expressed. Expressed in podocytes.

The protein resides in the nucleus. Functionally, acts as a transcriptional repressor. Represses the promoter activity of the CDC25C gene stimulated by NFYA. May play a role in retinal development where it regulates the composition of bipolar cell populations, by promoting differentiation of bipolar OFF-type cells. In the brain, may promote maintenance and suppress differentiation of neural progenitor cells in the developing cortex. The polypeptide is Zinc fingers and homeoboxes protein 2 (ZHX2) (Homo sapiens (Human)).